We begin with the raw amino-acid sequence, 408 residues long: MRGGGLWQLGQSVTRRLAQAEKKVIARRCFASEADLKKTALYDFHVANGGKMVPFAGWSMPIQYKDSIMDSTINCRENGSLFDVAHMCGLSLKGKDCIPFLEKLVVGDIAGLAPGTGTLSVLTNEKGGAIDDTVITKVTDDHIYLVVNAGCREKDLAHIEEHMKAFKAKGGDVSWHIHDERSLLALQGPLAAPVLQHLTKEDLSKFYFGQFTFLDINGFPCYLTRTGYTGEDGFEISVPNEYAVDLAKAMLEKSEGKVRLTGRGARDSLRLEAGLCLYGNDLEQHITPIEAGLTWAVGKRRRAEGGFLGAEVILKQIADGPPQRRVGFISSGPPARGHSEIQNEKGESIGEITSGGFSPCLKKNIAMGYVKSGNHKAGTKVNILVRGKPYEGVVTKMPFVPTKYYKSP.

The N-terminal 30 residues, 1–30, are a transit peptide targeting the mitochondrion; the sequence is MRGGGLWQLGQSVTRRLAQAEKKVIARRCF. Substrate contacts are provided by Glu235, Arg266, and Tyr404.

This sequence belongs to the GcvT family. The glycine cleavage system is composed of four proteins: P, T, L and H.

It is found in the mitochondrion. It carries out the reaction N(6)-[(R)-S(8)-aminomethyldihydrolipoyl]-L-lysyl-[protein] + (6S)-5,6,7,8-tetrahydrofolate = N(6)-[(R)-dihydrolipoyl]-L-lysyl-[protein] + (6R)-5,10-methylene-5,6,7,8-tetrahydrofolate + NH4(+). Functionally, the glycine cleavage system catalyzes the degradation of glycine. This chain is Aminomethyltransferase, mitochondrial (GDCST), found in Mesembryanthemum crystallinum (Common ice plant).